A 352-amino-acid chain; its full sequence is tRNA-specific 2-thiouridylase MnmA (352 aa).

An ATP-binding site is contributed by 6 to 13; that stretch reads AVSGGTDS. Cys-92 (nucleophile) is an active-site residue. A disulfide bridge links Cys-92 with Cys-189. Gly-116 is a binding site for ATP. The tract at residues 139–141 is interaction with tRNA; the sequence is KDQ. The active-site Cysteine persulfide intermediate is Cys-189. Residues 294–295 form an interaction with tRNA region; it reads RY.

The protein belongs to the MnmA/TRMU family.

The protein localises to the cytoplasm. The catalysed reaction is S-sulfanyl-L-cysteinyl-[protein] + uridine(34) in tRNA + AH2 + ATP = 2-thiouridine(34) in tRNA + L-cysteinyl-[protein] + A + AMP + diphosphate + H(+). In terms of biological role, catalyzes the 2-thiolation of uridine at the wobble position (U34) of tRNA, leading to the formation of s(2)U34. This chain is tRNA-specific 2-thiouridylase MnmA, found in Lawsonia intracellularis (strain PHE/MN1-00).